The following is a 308-amino-acid chain: Oxygen-dependent coproporphyrinogen-III oxidase (308 aa).

Ser100 serves as a coordination point for substrate. Positions 104 and 114 each coordinate a divalent metal cation. Catalysis depends on His114, which acts as the Proton donor. 116-118 (NFR) lines the substrate pocket. A divalent metal cation contacts are provided by His153 and His183. Residues 248–283 (YVEFNLVFDRGTIFGLQSGGRTESILSSMPPMATWK) form an important for dimerization region. 266–268 (GGR) lines the substrate pocket.

Belongs to the aerobic coproporphyrinogen-III oxidase family. In terms of assembly, homodimer. A divalent metal cation is required as a cofactor.

It is found in the cytoplasm. The catalysed reaction is coproporphyrinogen III + O2 + 2 H(+) = protoporphyrinogen IX + 2 CO2 + 2 H2O. It participates in porphyrin-containing compound metabolism; protoporphyrin-IX biosynthesis; protoporphyrinogen-IX from coproporphyrinogen-III (O2 route): step 1/1. Its function is as follows. Involved in the heme biosynthesis. Catalyzes the aerobic oxidative decarboxylation of propionate groups of rings A and B of coproporphyrinogen-III to yield the vinyl groups in protoporphyrinogen-IX. The protein is Oxygen-dependent coproporphyrinogen-III oxidase of Francisella tularensis subsp. holarctica (strain LVS).